We begin with the raw amino-acid sequence, 569 residues long: Amyloid-beta A4 precursor protein-binding family A member 3 (569 aa).

Methionine 1 is modified (N-acetylmethionine). Disordered stretches follow at residues 1 to 53 (MEFL…MELD) and 124 to 168 (AQSV…SSPE). Positions 19-32 (EEPKGPEVPSEDHP) are enriched in basic and acidic residues. Positions 132–141 (AQAAPRLLQP) are enriched in low complexity. Residues serine 166 and serine 367 each carry the phosphoserine modification. The region spanning 212 to 376 (DGVLFGAKYL…SASASHPHNG (165 aa)) is the PID domain. 2 consecutive PDZ domains span residues 389 to 475 (EVCI…IIHC) and 480 to 554 (TAVI…TMPA).

As to quaternary structure, binds to the cytoplasmic domain of amyloid protein (APP). Interacts with HIF1AN (via N-terminus). Interacts with NECAB3; seems to mediate the interaction between NECAB3 and HIF1AN. Ubiquitous.

It localises to the cytoplasm. The protein resides in the perinuclear region. In terms of biological role, may modulate processing of the amyloid-beta precursor protein (APP) and hence formation of APP-beta. May enhance the activity of HIF1A in macrophages by inhibiting the activity of HIF1AN. In Rattus norvegicus (Rat), this protein is Amyloid-beta A4 precursor protein-binding family A member 3 (Apba3).